The sequence spans 380 residues: MIYLPDGVQDFLPEEYKFKRKIEEKFREVFIKFGYQEIMPPTFEYSDNFSVLFDENNLYRFFDKKGNILALRPDVTTQIARIVSTKLKGSFPLKLCYVANVYRYDDPQVGKMREFTQAGIELIGTNHEESDAEIIAVAIEALKSVGIKDFKVDVGQVEFFKRVVEDLELQNEEINLLREFLQQKNQSAIEEFINDKGIRGKKAKFLSELPLLFGGEEVLKRAKELYDTPKLGETIDYLERVYRILKDFGMEEYISFDLGMVQNLNYYTGIIFRCFVKGIGYAICTGGRYDGLLGIFGEHIPATGFAISVERSMLALQKQKKDIIDKSWRVLIKYKENLRSNAYKKATLLRGEGKIVEMYSYEKAKHVDENSFDEIIDMEE.

It belongs to the class-II aminoacyl-tRNA synthetase family. HisZ subfamily. As to quaternary structure, heteromultimer composed of HisG and HisZ subunits.

Its subcellular location is the cytoplasm. It participates in amino-acid biosynthesis; L-histidine biosynthesis; L-histidine from 5-phospho-alpha-D-ribose 1-diphosphate: step 1/9. In terms of biological role, required for the first step of histidine biosynthesis. May allow the feedback regulation of ATP phosphoribosyltransferase activity by histidine. The polypeptide is ATP phosphoribosyltransferase regulatory subunit (Thermoanaerobacter pseudethanolicus (strain ATCC 33223 / 39E) (Clostridium thermohydrosulfuricum)).